The sequence spans 262 residues: LysM domain-containing protein ARB_03438 (262 aa).

The first 22 residues, 1 to 22 (MVSIPLILGAIILLGTRKAATA), serve as a signal peptide directing secretion. The LysM 1 domain maps to 31–75 (FAVTAATDDTCQSLGAQWGIGMAQFLKWNPGVNCNALVAGKTYCL). The tract at residues 85–112 (TASLTPSPQVPTTSRATQTMTSKASTGT) is disordered. The segment covering 86–112 (ASLTPSPQVPTTSRATQTMTSKASTGT) has biased composition (polar residues). Positions 132-179 (FYHPVSPGDTCQSIVDRYKAFTLDQFYTWNPSVGKNCESLWLGYYVCT) constitute a LysM 2 domain. Positions 184–240 (GPNSPSQQPPSQQPPSQQSPSQQSPSQQSPSQQPPSQQPPSQQPPSQQSNTSQQTQP) are disordered. A compositionally biased stretch (low complexity) spans 197-214 (PPSQQSPSQQSPSQQSPS). The segment covering 215 to 226 (QQPPSQQPPSQQ) has biased composition (pro residues). A compositionally biased stretch (low complexity) spans 227–240 (PPSQQSNTSQQTQP). N-linked (GlcNAc...) asparagine glycosylation is present at Asn233.

The protein resides in the secreted. Its function is as follows. Might have a role in sequestration of chitin oligosaccharides (breakdown products of fungal cell walls that are released during invasion and act as triggers of host immunity) to dampen host defense. The protein is LysM domain-containing protein ARB_03438 of Arthroderma benhamiae (strain ATCC MYA-4681 / CBS 112371) (Trichophyton mentagrophytes).